The following is a 307-amino-acid chain: Murein tetrapeptide carboxypeptidase (307 aa).

Serine 115 (nucleophile) is an active-site residue. Catalysis depends on charge relay system residues glutamate 217 and histidine 285.

It belongs to the peptidase S66 family. As to quaternary structure, homodimer.

Its subcellular location is the cytoplasm. The catalysed reaction is N-acetyl-D-glucosaminyl-N-acetylmuramoyl-L-alanyl-meso-2,6-diaminoheptanedioyl-D-alanine + H2O = N-acetyl-D-glucosaminyl-N-acetylmuramoyl-L-alanyl-meso-2,6-diaminoheptanedioate + D-alanine. The protein operates within cell wall biogenesis; peptidoglycan recycling. Functionally, releases the terminal D-alanine residue from the cytoplasmic disaccharide-tetrapeptide GlcNAc-MurNAc-L-Ala-gamma-D-Glu-meso-Dap-D-Ala, which is a murein turnover product. Probably also act on free tetrapetide. May be involved in murein recycling. The polypeptide is Murein tetrapeptide carboxypeptidase (Pseudomonas aeruginosa (strain ATCC 15692 / DSM 22644 / CIP 104116 / JCM 14847 / LMG 12228 / 1C / PRS 101 / PAO1)).